Consider the following 517-residue polypeptide: Xyloglucan galactosyltransferase XLT2 (517 aa).

Positions 1-31 (MLPVSNPSSPEHLLKKSRTPDSTTSIDRKNS) are disordered. Over 1–49 (MLPVSNPSSPEHLLKKSRTPDSTTSIDRKNSFNSLHSVGNRSSYIAASR) the chain is Cytoplasmic. Residues 20–31 (PDSTTSIDRKNS) show a composition bias toward polar residues. The chain crosses the membrane as a helical; Signal-anchor for type II membrane protein span at residues 50–70 (SHCTWLILSLLSLQLILFLTL). The Lumenal segment spans residues 71–517 (RSIPFPHRHI…KEQEKWYKWR (447 aa)). Residues N250, N288, N377, and N449 are each glycosylated (N-linked (GlcNAc...) asparagine).

It belongs to the glycosyltransferase 47 family. As to quaternary structure, interacts with CSLC4, FUT1, XXT2 and XXT5. In terms of tissue distribution, expressed in roots, hypocotyls, cotyledons, leaves, stems and flowers.

It localises to the golgi apparatus membrane. Functions in xyloglucan synthesis by adding side chains to the xylosylated glucan backbone. Involved in galactosylating hemicellulose xyloglucan (XyG) at the second position of the XXXG motif to form XLXG. Associates with other xyloglucan-synthesizing enzymes to form multiprotein complexes for xyloglucan synthesis in the Golgi. In Arabidopsis thaliana (Mouse-ear cress), this protein is Xyloglucan galactosyltransferase XLT2.